The following is a 206-amino-acid chain: Dihydrofolate reductase (206 aa).

The DHFR domain maps to Ser6–Arg204. Residues Ala12 and Gly18–Ser24 each bind NADP(+). Residue Glu32–Lys37 coordinates substrate. Arg59–Thr61 is a binding site for NADP(+). Position 75 (Arg75) interacts with substrate. Residues Thr81–Asn83 and Gly124–Ala131 each bind NADP(+).

The protein belongs to the dihydrofolate reductase family.

The catalysed reaction is (6S)-5,6,7,8-tetrahydrofolate + NADP(+) = 7,8-dihydrofolate + NADPH + H(+). Its pathway is cofactor biosynthesis; tetrahydrofolate biosynthesis; 5,6,7,8-tetrahydrofolate from 7,8-dihydrofolate: step 1/1. In terms of biological role, key enzyme in folate metabolism. Catalyzes an essential reaction for de novo glycine and purine synthesis, and for DNA precursor synthesis. This chain is Dihydrofolate reductase, found in Pneumocystis carinii.